Consider the following 203-residue polypeptide: Glycerol-3-phosphate acyltransferase 1 (203 aa).

6 helical membrane passes run 2-22, 52-72, 82-102, 117-137, 150-168, and 170-190; these read LNFFLITIQFLSGAVMYSHII, GFPALMLDYFKGTFPIAFFVW, VIAFAALSGILGHAFSPFLKF, VLTKWEGPMVLGTVFTIFSIL, EDAFRVMIGFAALLIYTMW, and VFNGMPELAILYFGNFLIVFY.

It belongs to the PlsY family. In terms of assembly, probably interacts with PlsX.

The protein resides in the cell inner membrane. It carries out the reaction an acyl phosphate + sn-glycerol 3-phosphate = a 1-acyl-sn-glycero-3-phosphate + phosphate. It participates in lipid metabolism; phospholipid metabolism. In terms of biological role, catalyzes the transfer of an acyl group from acyl-phosphate (acyl-PO(4)) to glycerol-3-phosphate (G3P) to form lysophosphatidic acid (LPA). This enzyme utilizes acyl-phosphate as fatty acyl donor, but not acyl-CoA or acyl-ACP. The chain is Glycerol-3-phosphate acyltransferase 1 from Thermotoga maritima (strain ATCC 43589 / DSM 3109 / JCM 10099 / NBRC 100826 / MSB8).